Consider the following 361-residue polypeptide: 3-dehydroquinate synthase (361 aa).

The protein belongs to the archaeal-type DHQ synthase family.

It catalyses the reaction 2-amino-2,3,7-trideoxy-D-lyxo-hept-6-ulosonate + NAD(+) + H2O = 3-dehydroquinate + NH4(+) + NADH + H(+). Its function is as follows. Catalyzes the oxidative deamination and cyclization of 2-amino-3,7-dideoxy-D-threo-hept-6-ulosonic acid (ADH) to yield 3-dehydroquinate (DHQ), which is fed into the canonical shikimic pathway of aromatic amino acid biosynthesis. The chain is 3-dehydroquinate synthase from Methanococcus maripaludis (strain C5 / ATCC BAA-1333).